The primary structure comprises 215 residues: Phosphatidylserine decarboxylase proenzyme (215 aa).

The Schiff-base intermediate with substrate; via pyruvic acid role is filled by Ser184. At Ser184 the chain carries Pyruvic acid (Ser); by autocatalysis.

It belongs to the phosphatidylserine decarboxylase family. PSD-A subfamily. Heterodimer of a large membrane-associated beta subunit and a small pyruvoyl-containing alpha subunit. It depends on pyruvate as a cofactor. Post-translationally, is synthesized initially as an inactive proenzyme. Formation of the active enzyme involves a self-maturation process in which the active site pyruvoyl group is generated from an internal serine residue via an autocatalytic post-translational modification. Two non-identical subunits are generated from the proenzyme in this reaction, and the pyruvate is formed at the N-terminus of the alpha chain, which is derived from the carboxyl end of the proenzyme. The post-translation cleavage follows an unusual pathway, termed non-hydrolytic serinolysis, in which the side chain hydroxyl group of the serine supplies its oxygen atom to form the C-terminus of the beta chain, while the remainder of the serine residue undergoes an oxidative deamination to produce ammonia and the pyruvoyl prosthetic group on the alpha chain.

It is found in the cell membrane. It catalyses the reaction a 1,2-diacyl-sn-glycero-3-phospho-L-serine + H(+) = a 1,2-diacyl-sn-glycero-3-phosphoethanolamine + CO2. It participates in phospholipid metabolism; phosphatidylethanolamine biosynthesis; phosphatidylethanolamine from CDP-diacylglycerol: step 2/2. Catalyzes the formation of phosphatidylethanolamine (PtdEtn) from phosphatidylserine (PtdSer). In Aromatoleum aromaticum (strain DSM 19018 / LMG 30748 / EbN1) (Azoarcus sp. (strain EbN1)), this protein is Phosphatidylserine decarboxylase proenzyme.